We begin with the raw amino-acid sequence, 84 residues long: Small ribosomal subunit protein uS17 (84 aa).

Belongs to the universal ribosomal protein uS17 family. In terms of assembly, part of the 30S ribosomal subunit.

In terms of biological role, one of the primary rRNA binding proteins, it binds specifically to the 5'-end of 16S ribosomal RNA. This Moorella thermoacetica (strain ATCC 39073 / JCM 9320) protein is Small ribosomal subunit protein uS17.